The following is a 228-amino-acid chain: ATP phosphoribosyltransferase (228 aa).

This sequence belongs to the ATP phosphoribosyltransferase family. Short subfamily. Heteromultimer composed of HisG and HisZ subunits.

The protein resides in the cytoplasm. The enzyme catalyses 1-(5-phospho-beta-D-ribosyl)-ATP + diphosphate = 5-phospho-alpha-D-ribose 1-diphosphate + ATP. Its pathway is amino-acid biosynthesis; L-histidine biosynthesis; L-histidine from 5-phospho-alpha-D-ribose 1-diphosphate: step 1/9. Functionally, catalyzes the condensation of ATP and 5-phosphoribose 1-diphosphate to form N'-(5'-phosphoribosyl)-ATP (PR-ATP). Has a crucial role in the pathway because the rate of histidine biosynthesis seems to be controlled primarily by regulation of HisG enzymatic activity. In Moorella thermoacetica (strain ATCC 39073 / JCM 9320), this protein is ATP phosphoribosyltransferase.